A 73-amino-acid chain; its full sequence is uncharacterized protein (73 aa).

Residues valine 54–isoleucine 72 traverse the membrane as a helical segment.

The protein resides in the membrane. This is an uncharacterized protein from Saccharomyces cerevisiae (strain ATCC 204508 / S288c) (Baker's yeast).